A 171-amino-acid polypeptide reads, in one-letter code: MDFKQHITIVENFPKEGIRFKDITTLMQNGEVYKRAIDEMARFAKEKEVDLVVGPEARGFVVGCPIAYAIGKGFVPVRKAGKLPREVISVDYGLEYGKDRLTIHRDAIQKGQRVLIADDLLATGGTIEATVQMVEQLGGEVVGIAFMIELGYLNGRDKLVTYDVFSLTTYE.

This sequence belongs to the purine/pyrimidine phosphoribosyltransferase family. As to quaternary structure, homodimer.

The protein resides in the cytoplasm. The enzyme catalyses AMP + diphosphate = 5-phospho-alpha-D-ribose 1-diphosphate + adenine. The protein operates within purine metabolism; AMP biosynthesis via salvage pathway; AMP from adenine: step 1/1. Its function is as follows. Catalyzes a salvage reaction resulting in the formation of AMP, that is energically less costly than de novo synthesis. This chain is Adenine phosphoribosyltransferase, found in Halalkalibacterium halodurans (strain ATCC BAA-125 / DSM 18197 / FERM 7344 / JCM 9153 / C-125) (Bacillus halodurans).